Reading from the N-terminus, the 599-residue chain is Prostaglandin G/H synthase 1 (599 aa).

The first 23 residues, 1–23 (MSRSLLLWFLLFLLLLPPLPVLL), serve as a signal peptide directing secretion. One can recognise an EGF-like domain in the interval 31-69 (PVNPCCYYPCQHQGICVRFGLDRYQCDCTRTGYSGPNCT). Disulfide bonds link Cys35/Cys46, Cys36/Cys158, Cys40/Cys56, and Cys58/Cys68. N-linked (GlcNAc...) asparagine glycans are attached at residues Asn67, Asn103, and Asn143. His206 serves as the catalytic Proton acceptor. Tyr384 acts as the For cyclooxygenase activity in catalysis. His387 contacts heme b. Residues Cys568 and Cys574 are joined by a disulfide bond.

This sequence belongs to the prostaglandin G/H synthase family. As to quaternary structure, homodimer. The cofactor is heme b.

It localises to the microsome membrane. Its subcellular location is the endoplasmic reticulum membrane. It catalyses the reaction (5Z,8Z,11Z,14Z)-eicosatetraenoate + AH2 + 2 O2 = prostaglandin H2 + A + H2O. It carries out the reaction (5Z,8Z,11Z,14Z)-eicosatetraenoate + 2 O2 = prostaglandin G2. The catalysed reaction is prostaglandin G2 + AH2 = prostaglandin H2 + A + H2O. The enzyme catalyses (9Z,12Z)-octadecadienoate + AH2 + O2 = (9R)-hydroxy-(10E,12Z)-octadecadienoate + A + H2O. It catalyses the reaction (9Z,12Z)-octadecadienoate + AH2 + O2 = (9S)-hydroxy-(10E,12Z)-octadecadienoate + A + H2O. It carries out the reaction (9Z,12Z)-octadecadienoate + AH2 + O2 = (13S)-hydroxy-(9Z,11E)-octadecadienoate + A + H2O. The catalysed reaction is (9Z,12Z)-octadecadienoate + AH2 + O2 = (13R)-hydroxy-(9Z,11E)-octadecadienoate + A + H2O. It functions in the pathway lipid metabolism; prostaglandin biosynthesis. With respect to regulation, the cyclooxygenase activity is inhibited by nonsteroidal anti-inflammatory drugs (NSAIDs) including ibuprofen, flurbiprofen, ketoprofen, naproxen, flurbiprofen, anirolac, fenclofenac and diclofenac. Dual cyclooxygenase and peroxidase that plays an important role in the biosynthesis pathway of prostanoids, a class of C20 oxylipins mainly derived from arachidonate ((5Z,8Z,11Z,14Z)-eicosatetraenoate, AA, C20:4(n-6)), with a particular role in the inflammatory response. The cyclooxygenase activity oxygenates AA to the hydroperoxy endoperoxide prostaglandin G2 (PGG2), and the peroxidase activity reduces PGG2 to the hydroxy endoperoxide prostaglandin H2 (PGH2), the precursor of all 2-series prostaglandins and thromboxanes. This complex transformation is initiated by abstraction of hydrogen at carbon 13 (with S-stereochemistry), followed by insertion of molecular O2 to form the endoperoxide bridge between carbon 9 and 11 that defines prostaglandins. The insertion of a second molecule of O2 (bis-oxygenase activity) yields a hydroperoxy group in PGG2 that is then reduced to PGH2 by two electrons. Involved in the constitutive production of prostanoids in particular in the stomach and platelets. In gastric epithelial cells, it is a key step in the generation of prostaglandins, such as prostaglandin E2 (PGE2), which plays an important role in cytoprotection. In platelets, it is involved in the generation of thromboxane A2 (TXA2), which promotes platelet activation and aggregation, vasoconstriction and proliferation of vascular smooth muscle cells. Can also use linoleate (LA, (9Z,12Z)-octadecadienoate, C18:2(n-6)) as substrate and produce hydroxyoctadecadienoates (HODEs) in a regio- and stereospecific manner, being (9R)-HODE ((9R)-hydroxy-(10E,12Z)-octadecadienoate) and (13S)-HODE ((13S)-hydroxy-(9Z,11E)-octadecadienoate) its major products. The protein is Prostaglandin G/H synthase 1 of Homo sapiens (Human).